A 160-amino-acid chain; its full sequence is Cytochrome b6-f complex subunit 4 (160 aa).

A run of 3 helical transmembrane segments spans residues 36-56, 95-115, and 131-151; these read LLYMFPVVILGTIACLTGLAV, LLGIVLQSMIPLGLIAIPFIE, and AVFLFGTVFTLYLGIGAALPI.

The protein belongs to the cytochrome b family. PetD subfamily. The 4 large subunits of the cytochrome b6-f complex are cytochrome b6, subunit IV (17 kDa polypeptide, PetD), cytochrome f and the Rieske protein, while the 4 small subunits are PetG, PetL, PetM and PetN. The complex functions as a dimer.

The protein localises to the cellular thylakoid membrane. Functionally, component of the cytochrome b6-f complex, which mediates electron transfer between photosystem II (PSII) and photosystem I (PSI), cyclic electron flow around PSI, and state transitions. The polypeptide is Cytochrome b6-f complex subunit 4 (Synechococcus elongatus (strain ATCC 33912 / PCC 7942 / FACHB-805) (Anacystis nidulans R2)).